The primary structure comprises 242 residues: Uridylate kinase (242 aa).

12 to 15 (KLSG) contributes to the ATP binding site. The involved in allosteric activation by GTP stretch occupies residues 20 to 25 (GQKGYG). Residue G54 participates in UMP binding. G55 and R59 together coordinate ATP. UMP-binding positions include D74 and 135 to 142 (TGNPYFST). ATP is bound by residues Q163, Y168, and D171.

It belongs to the UMP kinase family. Homohexamer.

It is found in the cytoplasm. It catalyses the reaction UMP + ATP = UDP + ADP. The protein operates within pyrimidine metabolism; CTP biosynthesis via de novo pathway; UDP from UMP (UMPK route): step 1/1. With respect to regulation, allosterically activated by GTP. Inhibited by UTP. In terms of biological role, catalyzes the reversible phosphorylation of UMP to UDP. This is Uridylate kinase from Desulforamulus reducens (strain ATCC BAA-1160 / DSM 100696 / MI-1) (Desulfotomaculum reducens).